The following is a 1563-amino-acid chain: DNA-directed RNA polymerase subunit beta' (1563 aa).

Zn(2+)-binding residues include Cys-61, Cys-63, Cys-76, and Cys-79. Residues Asp-588, Asp-590, and Asp-592 each coordinate Mg(2+). Cys-925, Cys-999, Cys-1006, and Cys-1009 together coordinate Zn(2+).

This sequence belongs to the RNA polymerase beta' chain family. In terms of assembly, the RNAP catalytic core consists of 2 alpha, 1 beta, 1 beta' and 1 omega subunit. When a sigma factor is associated with the core the holoenzyme is formed, which can initiate transcription. It depends on Mg(2+) as a cofactor. Requires Zn(2+) as cofactor.

It catalyses the reaction RNA(n) + a ribonucleoside 5'-triphosphate = RNA(n+1) + diphosphate. Functionally, DNA-dependent RNA polymerase catalyzes the transcription of DNA into RNA using the four ribonucleoside triphosphates as substrates. The sequence is that of DNA-directed RNA polymerase subunit beta' from Hydrogenobaculum sp. (strain Y04AAS1).